The primary structure comprises 826 residues: Ferric-pyoverdine M114 receptor PbuA (826 aa).

Residues 1–44 (MSASRFMLRPLTRALLMHGATRTRLAGTGLGLALTLTAAPYVQA) form the signal peptide. The TonB box motif lies at 110 to 119 (DGNTVTVLGP). The region spanning 160-271 (SLKETPQSVT…TAGGVNFVRK (112 aa)) is the TBDR plug domain. In terms of domain architecture, TBDR beta-barrel spans 276 to 826 (TAHTQLSLSA…NFVMSVKADF (551 aa)). The TonB C-terminal box motif lies at 809–826 (GNFYGDPRNFVMSVKADF).

It belongs to the TonB-dependent receptor family.

The protein localises to the cell outer membrane. In terms of biological role, specific receptor for the siderophore ferric pyoverdine (pseudobactin) M114. The polypeptide is Ferric-pyoverdine M114 receptor PbuA (pbuA) (Pseudomonas sp. (strain M114)).